Consider the following 266-residue polypeptide: 3-oxoadipate enol-lactonase 1 (266 aa).

The 223-residue stretch at 28–250 folds into the AB hydrolase-1 domain; that stretch reads PAIVFSNSLG…DASHLSNIEQ (223 aa).

It catalyses the reaction (4,5-dihydro-5-oxofuran-2-yl)-acetate + H2O = 3-oxoadipate + H(+). It functions in the pathway aromatic compound metabolism; beta-ketoadipate pathway; 3-oxoadipate from 5-oxo-4,5-dihydro-2-furylacetate: step 1/1. This chain is 3-oxoadipate enol-lactonase 1 (pcaD), found in Acinetobacter baylyi (strain ATCC 33305 / BD413 / ADP1).